Consider the following 205-residue polypeptide: MTENQQLTALLAACHWIGEKGWCPATGGNMSVRLDDAQCLITESGKDKGSLQAEDFLLVEIATNHVPSGRTPSAETGLHTLLYRREPTIGAVLHTHSVNATVLSRVEKGAELVLHGYEMQKSLAGQTTHLDRVAIPIFDNDQDIPALAQRVTEYASHTPLRYGFLVRGHGLYCWGATVKEARRHLEGLEFLFQCELQRRLLEAKA.

Positions 94 and 96 each coordinate Zn(2+).

The protein belongs to the aldolase class II family. MtnB subfamily. Requires Zn(2+) as cofactor.

It carries out the reaction 5-(methylsulfanyl)-D-ribulose 1-phosphate = 5-methylsulfanyl-2,3-dioxopentyl phosphate + H2O. The protein operates within amino-acid biosynthesis; L-methionine biosynthesis via salvage pathway; L-methionine from S-methyl-5-thio-alpha-D-ribose 1-phosphate: step 2/6. Functionally, catalyzes the dehydration of methylthioribulose-1-phosphate (MTRu-1-P) into 2,3-diketo-5-methylthiopentyl-1-phosphate (DK-MTP-1-P). In Pectobacterium carotovorum subsp. carotovorum (strain PC1), this protein is Methylthioribulose-1-phosphate dehydratase.